The primary structure comprises 279 residues: Protein gustavus (279 aa).

The B30.2/SPRY domain maps to P36–D233. Residues P234–R279 enclose the SOCS box domain. The involved in binding to the Elongin BC complex stretch occupies residues P236–R279.

This sequence belongs to the SPSB family. Interacts (via B30.2/SPRY domain) with vas; this interaction may be necessary for the transport of vas to the posterior pole of the oocyte. Interacts with Cul-5. May associate with the Elongin BC complex composed of Elongin-B and Elongin-C. As to expression, expressed in ovaries, primarily in nurse cells and oocytes (at protein level).

Its subcellular location is the cytoplasm. The protein localises to the nucleus. Its function is as follows. Involved in the localization of vas to the posterior pole of the oocyte. Required maternally in the germ line for efficient primordial germ cell formation. The protein is Protein gustavus (gus) of Drosophila melanogaster (Fruit fly).